Reading from the N-terminus, the 327-residue chain is Complex I intermediate-associated protein 30, mitochondrial (327 aa).

Residues 1–24 (MALVHKLLRDTYILRKFSKPTSAL) constitute a mitochondrion transit peptide. Residues 42–63 (PVASPGKASSQRKTEGDLQGDH) are disordered. The segment covering 53 to 63 (RKTEGDLQGDH) has biased composition (basic and acidic residues). S318 bears the Phosphoserine mark.

Belongs to the CIA30 family. In terms of assembly, part of the mitochondrial complex I assembly/MCIA complex that comprises at least the core subunits TMEM126B, NDUFAF1, ECSIT and ACAD9 and complement subunits such as COA1 and TMEM186. Interacts with ECSIT. Interacts with ACAD9. At early stages of complex I assembly, it is found in intermediate subcomplexes that contain different subunits including NDUFB6, NDUFA6, NDUFA9, NDUFS3, NDUFS7, ND1, ND2 and ND3. Interacts with TMEM70 and TMEM242.

Its subcellular location is the mitochondrion. It localises to the mitochondrion matrix. In terms of biological role, as part of the MCIA complex, involved in the assembly of the mitochondrial complex I. The polypeptide is Complex I intermediate-associated protein 30, mitochondrial (Gorilla gorilla gorilla (Western lowland gorilla)).